Consider the following 349-residue polypeptide: Large ribosomal subunit protein uL2mz, N-terminal part (349 aa).

Belongs to the universal ribosomal protein uL2 family. In terms of assembly, component of the mitochondrial ribosome large subunit.

It localises to the mitochondrion. The chain is Large ribosomal subunit protein uL2mz, N-terminal part from Arabidopsis thaliana (Mouse-ear cress).